Here is a 67-residue protein sequence, read N- to C-terminus: Large ribosomal subunit protein bL35 (67 aa).

A compositionally biased stretch (basic residues) spans 1–16; sequence MPKMKTKSGAKKRFRV. Positions 1 to 25 are disordered; that stretch reads MPKMKTKSGAKKRFRVRPGGTVKRG.

This sequence belongs to the bacterial ribosomal protein bL35 family.

The polypeptide is Large ribosomal subunit protein bL35 (Polaromonas sp. (strain JS666 / ATCC BAA-500)).